A 79-amino-acid chain; its full sequence is Toxin ICK-20 (79 aa).

The signal sequence occupies residues 1 to 20; the sequence is MMKYFLVLCLVVLGVAAVQA. 4 disulfide bridges follow: cysteine 43–cysteine 57, cysteine 50–cysteine 61, cysteine 56–cysteine 78, and cysteine 68–cysteine 74. The N-linked (GlcNAc...) asparagine glycan is linked to asparagine 71.

It belongs to the neurotoxin 13 (insecticidal toxin ABC) family. ICK-21 subfamily. Expressed by the venom gland.

It is found in the secreted. Ion channel inhibitor. The protein is Toxin ICK-20 of Trittame loki (Brush-footed trapdoor spider).